The primary structure comprises 412 residues: uncharacterized protein (412 aa).

Residues 20–199 (FFYFDFDAFF…LPIVELPGIG (180 aa)) enclose the UmuC domain.

It belongs to the DNA polymerase type-Y family.

This is an uncharacterized protein from Mycoplasma pneumoniae (strain ATCC 29342 / M129 / Subtype 1) (Mycoplasmoides pneumoniae).